A 794-amino-acid polypeptide reads, in one-letter code: Copper-exporting P-type ATPase (794 aa).

HMA domains follow at residues 5–70 (KKTT…YGVL) and 72–138 (ETAE…YDAQ). Cu(+) is bound by residues cysteine 16, cysteine 19, cysteine 83, and cysteine 86. 6 helical membrane-spanning segments follow: residues 162 to 182 (IISA…LFGI), 187 to 207 (IFMN…IIGW), 224 to 244 (MDVL…YEMV), 250 to 270 (ANVM…LILF), 411 to 431 (YFVP…IAFV), and 438 to 458 (PALV…LGLA). Aspartate 495 acts as the 4-aspartylphosphate intermediate in catalysis. Mg(2+) is bound by residues aspartate 689 and aspartate 693. The next 2 membrane-spanning stretches (helical) occupy residues 747–766 (LFWA…LGLL) and 770–789 (IAGA…ALRL).

The protein belongs to the cation transport ATPase (P-type) (TC 3.A.3) family. Type IB subfamily.

It localises to the cell membrane. It catalyses the reaction Cu(+)(in) + ATP + H2O = Cu(+)(out) + ADP + phosphate + H(+). In terms of biological role, involved in copper export. This Staphylococcus saprophyticus subsp. saprophyticus (strain ATCC 15305 / DSM 20229 / NCIMB 8711 / NCTC 7292 / S-41) protein is Copper-exporting P-type ATPase (copA).